Consider the following 122-residue polypeptide: Large ribosomal subunit protein uL14 (122 aa).

This sequence belongs to the universal ribosomal protein uL14 family. In terms of assembly, part of the 50S ribosomal subunit. Forms a cluster with proteins L3 and L19. In the 70S ribosome, L14 and L19 interact and together make contacts with the 16S rRNA in bridges B5 and B8.

Its function is as follows. Binds to 23S rRNA. Forms part of two intersubunit bridges in the 70S ribosome. The sequence is that of Large ribosomal subunit protein uL14 from Staphylococcus epidermidis (strain ATCC 35984 / DSM 28319 / BCRC 17069 / CCUG 31568 / BM 3577 / RP62A).